We begin with the raw amino-acid sequence, 232 residues long: UPF0758 protein FN0909 (232 aa).

The MPN domain maps to 110 to 232; that stretch reads KISNKDILLK…YFSFLEEGLI (123 aa). Residues His181, His183, and Asp194 each coordinate Zn(2+). The short motif at 181–194 is the JAMM motif element; sequence HNHPSDNITPSKSD.

It belongs to the UPF0758 family.

The chain is UPF0758 protein FN0909 from Fusobacterium nucleatum subsp. nucleatum (strain ATCC 25586 / DSM 15643 / BCRC 10681 / CIP 101130 / JCM 8532 / KCTC 2640 / LMG 13131 / VPI 4355).